Reading from the N-terminus, the 479-residue chain is Mannose-1-phosphate guanylyltransferase RfbM (479 aa).

This sequence belongs to the mannose-6-phosphate isomerase type 2 family. As to quaternary structure, homodimer.

The enzyme catalyses alpha-D-mannose 1-phosphate + GTP + H(+) = GDP-alpha-D-mannose + diphosphate. It functions in the pathway nucleotide-sugar biosynthesis; GDP-alpha-D-mannose biosynthesis; GDP-alpha-D-mannose from alpha-D-mannose 1-phosphate (GTP route): step 1/1. The protein operates within bacterial outer membrane biogenesis; LPS O-antigen biosynthesis. Its function is as follows. Involved in GDP-mannose biosynthesis which serves as the activated sugar nucleotide precursor for mannose residues in cell surface polysaccharides. This enzyme participates in synthesis of the LPS group B O antigen. In Salmonella typhimurium (strain LT2 / SGSC1412 / ATCC 700720), this protein is Mannose-1-phosphate guanylyltransferase RfbM (rfbM).